Here is a 167-residue protein sequence, read N- to C-terminus: U-scoloptoxin(08)-Er5b (167 aa).

An N-terminal signal peptide occupies residues 1–22; the sequence is MKTNCEFPLLCLLIVLVANVEG. Positions 23 to 94 are excised as a propeptide; it reads EVEDTGLKMV…KRLWRNWERR (72 aa). RLWRNWE repeat units lie at residues 34–40, 61–67, and 86–92; these read RLWRNWE. Q95 is modified (pyrrolidone carboxylic acid). The stretch at 107 to 113 is one RLWRNWE 4; approximate repeat; the sequence is ELWRNWE. Residues 112-118 constitute a propeptide that is removed on maturation; the sequence is WEDLKRR. The residue at position 119 (Q119) is a Pyrrolidone carboxylic acid. The RLWRNWE 5 repeat unit spans residues 134–140; the sequence is RLWRNWE. The propeptide occupies 139-167; sequence WEDNHATLRKRSADSLSRQKRLGKERGKE. The interval 147–167 is disordered; that stretch reads RKRSADSLSRQKRLGKERGKE.

The protein belongs to the scoloptoxin-08 family. As to expression, expressed by the venom gland.

The protein localises to the secreted. The polypeptide is U-scoloptoxin(08)-Er5b (Ethmostigmus rubripes (Giant centipede)).